The following is a 265-amino-acid chain: Small ribosomal subunit protein uS2 (265 aa).

It belongs to the universal ribosomal protein uS2 family.

The polypeptide is Small ribosomal subunit protein uS2 (Aliarcobacter butzleri (strain RM4018) (Arcobacter butzleri)).